The primary structure comprises 255 residues: Borealin-2 (255 aa).

2 disordered regions span residues Met-1–Glu-24 and Ile-107–Ser-156. A compositionally biased stretch (polar residues) spans Ala-124–Thr-135.

It belongs to the borealin family. As to quaternary structure, component of the CPC complex.

The protein resides in the nucleus. It is found in the chromosome. Its subcellular location is the centromere. Component of the chromosomal passenger complex (CPC), a complex that acts as a key regulator of mitosis. The CPC complex has essential functions at the centromere in ensuring correct chromosome alignment and segregation and is required for chromatin-induced microtubule stabilization and spindle assembly. This Danio rerio (Zebrafish) protein is Borealin-2 (cdca9).